The sequence spans 68 residues: Putative membrane protein insertion efficiency factor (68 aa).

It belongs to the UPF0161 family.

It localises to the cell membrane. Could be involved in insertion of integral membrane proteins into the membrane. The sequence is that of Putative membrane protein insertion efficiency factor from Herpetosiphon aurantiacus (strain ATCC 23779 / DSM 785 / 114-95).